The chain runs to 469 residues: Squamosa promoter-binding-like protein 3 (469 aa).

The segment at 96–118 is disordered; that stretch reads SAEEHDKNMDKGKSKVDDTGTSR. Over residues 97-115 the composition is skewed to basic and acidic residues; that stretch reads AEEHDKNMDKGKSKVDDTG. Residues 179 to 256 form an SBP-type zinc finger; it reads NPHCQVEGCN…HDHNARRRKP (78 aa). Residues C182, C187, C204, H207, C223, C226, H230, and C242 each contribute to the Zn(2+) site. Residues 239 to 255 carry the Bipartite nuclear localization signal motif; the sequence is KRSCRRRLHDHNARRRK. Residues 446 to 469 are disordered; it reads NDDDEDHLQLPKPSYDNSHYDQMN. The segment covering 460-469 has biased composition (polar residues); that stretch reads YDNSHYDQMN.

Ubiquitous.

It localises to the nucleus. Trans-acting factor that binds specifically to the consensus nucleotide sequence 5'-TNCGTACAA-3'. May be involved in panicle development. The sequence is that of Squamosa promoter-binding-like protein 3 (SPL3) from Oryza sativa subsp. indica (Rice).